A 120-amino-acid polypeptide reads, in one-letter code: NADH-ubiquinone oxidoreductase chain 3 (120 aa).

Transmembrane regions (helical) follow at residues 6 to 26 (LLFFVEHVFIFCMIFWLLTWV), 63 to 83 (IVCVFLILYDVEFIFMYPFFF), and 85 to 105 (FFLVNAGAFLVFFVFLFFVFY).

It belongs to the complex I subunit 3 family.

The protein localises to the mitochondrion membrane. It catalyses the reaction a ubiquinone + NADH + 5 H(+)(in) = a ubiquinol + NAD(+) + 4 H(+)(out). Functionally, core subunit of the mitochondrial membrane respiratory chain NADH dehydrogenase (Complex I) that is believed to belong to the minimal assembly required for catalysis. Complex I functions in the transfer of electrons from NADH to the respiratory chain. The immediate electron acceptor for the enzyme is believed to be ubiquinone. The protein is NADH-ubiquinone oxidoreductase chain 3 (ND3) of Paramecium tetraurelia.